The chain runs to 527 residues: Mitogen-activated protein kinase kinae MKK2 (527 aa).

Disordered stretches follow at residues 1 to 143 and 156 to 189; these read MHDQ…SAGS and IGSTRPQGTPDPASAVGSIYSERSDGGAGMDKDG. A compositionally biased stretch (low complexity) spans 107–129; sequence QQGQSASGGSESSAAHSRSGSFG. A compositionally biased stretch (polar residues) spans 134-143; the sequence is RTSNPTSAGS. Basic and acidic residues predominate over residues 177-189; sequence ERSDGGAGMDKDG. In terms of domain architecture, Protein kinase spans 227-497; the sequence is IVELGGLGEG…PWRMLEHPWM (271 aa). Residues 233–241 and Lys256 each bind ATP; that span reads LGEGAGGAV.

It belongs to the protein kinase superfamily. STE Ser/Thr protein kinase family. MAP kinase kinase subfamily. Interacts with the adapter protein MST50.

The enzyme catalyses L-seryl-[protein] + ATP = O-phospho-L-seryl-[protein] + ADP + H(+). The catalysed reaction is L-threonyl-[protein] + ATP = O-phospho-L-threonyl-[protein] + ADP + H(+). Functionally, mitogen-activated protein kinase kinase; part of the MCK1-MKK2-MPS1 MAP kinase (MAPK) signal transduction cascade that is essential for appressorium formation, penetration and invasive growth. Beside its role in pathogenesis, the MPS1 cascade is active in conidiation and cellular stress responses. Targets downstream of the the MPS1-MAPK pathway include transcription factors MIG1 and SWI6, as well as GSK1 and MPG1. This chain is Mitogen-activated protein kinase kinae MKK2, found in Pyricularia oryzae (strain 70-15 / ATCC MYA-4617 / FGSC 8958) (Rice blast fungus).